Consider the following 246-residue polypeptide: 1-(5-phosphoribosyl)-5-[(5-phosphoribosylamino)methylideneamino] imidazole-4-carboxamide isomerase (246 aa).

Aspartate 10 functions as the Proton acceptor in the catalytic mechanism.

The protein belongs to the HisA/HisF family.

It is found in the cytoplasm. It catalyses the reaction 1-(5-phospho-beta-D-ribosyl)-5-[(5-phospho-beta-D-ribosylamino)methylideneamino]imidazole-4-carboxamide = 5-[(5-phospho-1-deoxy-D-ribulos-1-ylimino)methylamino]-1-(5-phospho-beta-D-ribosyl)imidazole-4-carboxamide. It participates in amino-acid biosynthesis; L-histidine biosynthesis; L-histidine from 5-phospho-alpha-D-ribose 1-diphosphate: step 4/9. This is 1-(5-phosphoribosyl)-5-[(5-phosphoribosylamino)methylideneamino] imidazole-4-carboxamide isomerase from Corynebacterium efficiens (strain DSM 44549 / YS-314 / AJ 12310 / JCM 11189 / NBRC 100395).